We begin with the raw amino-acid sequence, 185 residues long: Ribosome-recycling factor (185 aa).

Belongs to the RRF family.

It is found in the cytoplasm. In terms of biological role, responsible for the release of ribosomes from messenger RNA at the termination of protein biosynthesis. May increase the efficiency of translation by recycling ribosomes from one round of translation to another. This chain is Ribosome-recycling factor, found in Bacillus cereus (strain ATCC 10987 / NRS 248).